A 670-amino-acid chain; its full sequence is Probable plastid-lipid-associated protein 14, chloroplastic (670 aa).

The transit peptide at M1–S52 directs the protein to the chloroplast. Residues F88–L399 form the Protein kinase domain.

Belongs to the PAP/fibrillin family. Not autophosphorylated. In terms of tissue distribution, expressed in roots.

It is found in the plastid. Its subcellular location is the chloroplast. In terms of biological role, directly regulated by DOF3.6/OBP3; unknown function. The polypeptide is Probable plastid-lipid-associated protein 14, chloroplastic (PAP14) (Arabidopsis thaliana (Mouse-ear cress)).